Here is a 79-residue protein sequence, read N- to C-terminus: Cell division protein ZapB (79 aa).

Residues 1–78 are a coiled coil; the sequence is MSLEALDQLQ…LNSLLGKMDD (78 aa).

The protein belongs to the ZapB family. As to quaternary structure, homodimer. The ends of the coiled-coil dimer bind to each other, forming polymers. Interacts with FtsZ.

It localises to the cytoplasm. Functionally, non-essential, abundant cell division factor that is required for proper Z-ring formation. It is recruited early to the divisome by direct interaction with FtsZ, stimulating Z-ring assembly and thereby promoting cell division earlier in the cell cycle. Its recruitment to the Z-ring requires functional FtsA or ZipA. The polypeptide is Cell division protein ZapB (Hamiltonella defensa subsp. Acyrthosiphon pisum (strain 5AT)).